The sequence spans 408 residues: Histidine--tRNA ligase (408 aa).

It belongs to the class-II aminoacyl-tRNA synthetase family. In terms of assembly, homodimer.

The protein localises to the cytoplasm. It carries out the reaction tRNA(His) + L-histidine + ATP = L-histidyl-tRNA(His) + AMP + diphosphate + H(+). The protein is Histidine--tRNA ligase of Wolbachia pipientis wMel.